Reading from the N-terminus, the 499-residue chain is Lysine--tRNA ligase (499 aa).

Mg(2+) contacts are provided by glutamate 407 and glutamate 414.

Belongs to the class-II aminoacyl-tRNA synthetase family. In terms of assembly, homodimer. It depends on Mg(2+) as a cofactor.

It localises to the cytoplasm. The catalysed reaction is tRNA(Lys) + L-lysine + ATP = L-lysyl-tRNA(Lys) + AMP + diphosphate. The sequence is that of Lysine--tRNA ligase from Lactiplantibacillus plantarum (strain ATCC BAA-793 / NCIMB 8826 / WCFS1) (Lactobacillus plantarum).